Reading from the N-terminus, the 426-residue chain is Ornithine aminotransferase (426 aa).

An N6-(pyridoxal phosphate)lysine modification is found at lysine 291.

This sequence belongs to the class-III pyridoxal-phosphate-dependent aminotransferase family. The cofactor is pyridoxal 5'-phosphate.

The catalysed reaction is a 2-oxocarboxylate + L-ornithine = L-glutamate 5-semialdehyde + an L-alpha-amino acid. The protein operates within amino-acid biosynthesis; L-proline biosynthesis; L-glutamate 5-semialdehyde from L-ornithine: step 1/1. The polypeptide is Ornithine aminotransferase (Vigna aconitifolia (Moth bean)).